The following is a 589-amino-acid chain: Coiled-coil domain-containing protein 22 homolog (589 aa).

Coiled coils occupy residues 287-426 and 523-589; these read KTPL…LQTK and CEEL…TSRQ. The disordered stretch occupies residues 568-589; it reads EMQNESQRLEESIRRMEVTSRQ. Residues 574-589 are compositionally biased toward basic and acidic residues; the sequence is QRLEESIRRMEVTSRQ.

Belongs to the CCDC22 family.

The polypeptide is Coiled-coil domain-containing protein 22 homolog (Aedes aegypti (Yellowfever mosquito)).